The chain runs to 348 residues: tRNA N6-adenosine threonylcarbamoyltransferase (348 aa).

Residues histidine 116 and histidine 120 each coordinate Fe cation. Substrate-binding positions include 138-142 (QVSGG), aspartate 171, glycine 184, aspartate 188, and asparagine 277. Residue aspartate 309 coordinates Fe cation.

This sequence belongs to the KAE1 / TsaD family. Requires Fe(2+) as cofactor.

Its subcellular location is the cytoplasm. The catalysed reaction is L-threonylcarbamoyladenylate + adenosine(37) in tRNA = N(6)-L-threonylcarbamoyladenosine(37) in tRNA + AMP + H(+). Functionally, required for the formation of a threonylcarbamoyl group on adenosine at position 37 (t(6)A37) in tRNAs that read codons beginning with adenine. Is involved in the transfer of the threonylcarbamoyl moiety of threonylcarbamoyl-AMP (TC-AMP) to the N6 group of A37, together with TsaE and TsaB. TsaD likely plays a direct catalytic role in this reaction. This chain is tRNA N6-adenosine threonylcarbamoyltransferase, found in Lactobacillus johnsonii (strain CNCM I-12250 / La1 / NCC 533).